We begin with the raw amino-acid sequence, 382 residues long: RNA exonuclease 3 (382 aa).

An Exonuclease domain is found at 223–369 (VLALDCEMAY…EDAIAAMDVV (147 aa)).

Belongs to the REXO1/REXO3 family.

The protein localises to the cytoplasm. It is found in the nucleus. Its function is as follows. 3' to 5' exoribonuclease required for proper 3' end maturation of MRP RNA and of the U5L snRNA. The chain is RNA exonuclease 3 (REX3) from Eremothecium gossypii (strain ATCC 10895 / CBS 109.51 / FGSC 9923 / NRRL Y-1056) (Yeast).